Reading from the N-terminus, the 90-residue chain is Small ribosomal subunit protein uS19 (90 aa).

Belongs to the universal ribosomal protein uS19 family.

Its function is as follows. Protein S19 forms a complex with S13 that binds strongly to the 16S ribosomal RNA. This is Small ribosomal subunit protein uS19 from Methylococcus capsulatus (strain ATCC 33009 / NCIMB 11132 / Bath).